A 196-amino-acid chain; its full sequence is SAGA-associated factor 11 homolog (196 aa).

The disordered stretch occupies residues M1–T22. An SGF11-type zinc finger spans residues C106–C127. The segment at T144–F196 is disordered. A Phosphoserine modification is found at S172. Residues N180–F196 show a composition bias toward low complexity.

This sequence belongs to the SGF11 family. Component of some SAGA transcription coactivator-HAT complexes, at least composed of Ada2b, not/nonstop, Pcaf/Gcn5, Sgf11 and Spt3. Within the SAGA complex, Sgf11, e(y)2, and not/nonstop form an additional subcomplex of SAGA called the DUB module (deubiquitination module). Interacts directly with not/nonstop. Interacts with the AMEX complex component xmas-2. Interacts with Cbp80; important for promoter recruitment of Sgf11 that is not associated with the DUB module.

Its subcellular location is the nucleus. The protein resides in the nucleoplasm. It is found in the cytoplasm. In terms of biological role, component of the transcription regulatory histone acetylation (HAT) complex SAGA, a multiprotein complex that activates transcription by remodeling chromatin and mediating histone acetylation and deubiquitination. Within the SAGA complex, participates in a subcomplex that specifically deubiquitinates histone H2B. The SAGA complex is recruited to specific gene promoters by activators, where it is required for transcription. Required for nuclear receptor-mediated transactivation. Binds independently on SAGA to promoters in an RNA-dependent manner. Binds to mRNA and is essential for total mRNA export from the nucleus. Required to counteract heterochromatin silencing. Controls the development of neuronal connectivity in visual system by being required for accurate axon targeting in the optic lobe. Required for expression of ecdysone-induced genes such as br/broad. The protein is SAGA-associated factor 11 homolog of Drosophila yakuba (Fruit fly).